A 188-amino-acid polypeptide reads, in one-letter code: MAEPTPVGREIIYCGVCTLPPEYCEYGGTTKKCQEWLEKKHPDLYARIWSPEALEAATASLSLAAQERAAKDAAKKAAKAEAAEQKHADKLAKSVVTIKRIERNKRKFVTSVTGLEAFGLELKKVAKDFGKKFATGASVTKVPSGGEEIVVQGDVSGEIEEFLLEKYKDIPEDNIELVEDKKKKASAG.

In terms of domain architecture, SUI1 spans 96-167 (VTIKRIERNK…EIEEFLLEKY (72 aa)).

It belongs to the DENR family. Interacts with the 40S ribosomal subunit.

The protein resides in the cytoplasm. This chain is Translation machinery-associated protein 22 (TMA22), found in Chaetomium globosum (strain ATCC 6205 / CBS 148.51 / DSM 1962 / NBRC 6347 / NRRL 1970) (Soil fungus).